A 348-amino-acid polypeptide reads, in one-letter code: Neutral peroxidase (348 aa).

The signal sequence occupies residues 1-20; that stretch reads MASFVARLTLALSFIALALA. Positions 21–67 are excised as a propeptide; it reads GYSLVQNTLSSPTHTRLNLIPTWLDSTFDSADVLSYLGFGKSSGRLS. Intrachain disulfides connect cysteine 71-cysteine 149, cysteine 102-cysteine 107, cysteine 156-cysteine 344, and cysteine 235-cysteine 256. Histidine 100 functions as the Proton acceptor in the catalytic mechanism. The Ca(2+) site is built by aspartate 101, valine 104, glycine 106, and aspartate 108. N-linked (GlcNAc...) asparagine glycans are attached at residues asparagine 114, asparagine 118, asparagine 173, asparagine 177, and asparagine 189. Proline 198 contacts substrate. Residue asparagine 203 is glycosylated (N-linked (GlcNAc...) asparagine). Position 228 (histidine 228) interacts with heme b. A Ca(2+)-binding site is contributed by threonine 229. N-linked (GlcNAc...) asparagine glycans are attached at residues asparagine 247 and asparagine 261. The Ca(2+) site is built by aspartate 269, serine 271, and aspartate 276. An N-linked (GlcNAc...) asparagine glycan is attached at asparagine 300.

It belongs to the peroxidase family. Classical plant (class III) peroxidase subfamily. Requires Ca(2+) as cofactor. It depends on heme b as a cofactor. Highly expressed in suspension cultured cells. Weak expression also found in the stems of intact plants. No expression in leaf, tuberous root and non-tuberous root.

Its subcellular location is the secreted. It catalyses the reaction 2 a phenolic donor + H2O2 = 2 a phenolic radical donor + 2 H2O. Removal of H(2)O(2), oxidation of toxic reductants, biosynthesis and degradation of lignin, suberization, auxin catabolism, response to environmental stresses such as wounding, pathogen attack and oxidative stress. These functions might be dependent on each isozyme/isoform in each plant tissue. Its function is as follows. May contribute to protection against cold-induced oxidative stress. This is Neutral peroxidase from Ipomoea batatas (Sweet potato).